The following is a 148-amino-acid chain: Hemoglobin subunit beta-2 (148 aa).

Positions 3-148 (EWTDAERTAI…VVSALCRQYH (146 aa)) constitute a Globin domain. Heme b contacts are provided by H64 and H93.

In terms of assembly, heterotetramer of two alpha chains and two beta chains. In terms of tissue distribution, red blood cells.

In terms of biological role, involved in oxygen transport from gills to the various peripheral tissues. The polypeptide is Hemoglobin subunit beta-2 (ba2) (Danio rerio (Zebrafish)).